We begin with the raw amino-acid sequence, 106 residues long: uncharacterized protein (106 aa).

Belongs to the HesB/IscA family.

This is an uncharacterized protein from Rhodobacter capsulatus (Rhodopseudomonas capsulata).